Reading from the N-terminus, the 222-residue chain is Kinetochore protein Spc25 (222 aa).

Residues 51 to 100 (RHQRKVGKLQKVIMERREELDKRVSFIEELDRELEATKLRSLAMKDRIKQ) adopt a coiled-coil conformation.

The protein belongs to the SPC25 family. Component of the Ndc80 complex, which is composed of Ndc80, Nuf2 and Spc25.

The protein localises to the nucleus. It localises to the chromosome. Its subcellular location is the centromere. The protein resides in the kinetochore. In terms of biological role, acts as a component of the essential kinetochore-associated Ndc80 complex, which is required for chromosome segregation and spindle checkpoint activity during meiosis and mitosis. Required for kinetochore integrity and the organization of stable microtubule binding sites in the outer plate of the kinetochore. Participates in SAC signaling that responds specifically to disruptions in spindle microtubule dynamics. The NDC80 complex synergistically enhances the affinity of the SKA1 complex for microtubules and may allow the NDC80 complex to track depolymerizing microtubules. The polypeptide is Kinetochore protein Spc25 (Drosophila sechellia (Fruit fly)).